A 347-amino-acid chain; its full sequence is NADH-ubiquinone oxidoreductase chain 2 (347 aa).

A run of 11 helical transmembrane segments spans residues 3–23, 25–45, 67–87, 96–116, 122–142, 145–165, 178–198, 200–220, 239–259, 274–294, and 325–345; these read PIIF…VMIS, HWLL…PIMM, SMLL…WTVM, MLMT…FWVP, IPLS…MSVL, IFPS…ILIG, IMAY…PYNP, MTLL…TMFM, IMTV…PLSG, NSII…YFYM, and FLPT…MLSV.

It belongs to the complex I subunit 2 family. Core subunit of respiratory chain NADH dehydrogenase (Complex I) which is composed of 45 different subunits. Interacts with TMEM242.

The protein resides in the mitochondrion inner membrane. It catalyses the reaction a ubiquinone + NADH + 5 H(+)(in) = a ubiquinol + NAD(+) + 4 H(+)(out). Core subunit of the mitochondrial membrane respiratory chain NADH dehydrogenase (Complex I) which catalyzes electron transfer from NADH through the respiratory chain, using ubiquinone as an electron acceptor. Essential for the catalytic activity and assembly of complex I. This chain is NADH-ubiquinone oxidoreductase chain 2, found in Bos indicus (Zebu).